We begin with the raw amino-acid sequence, 76 residues long: Acyl carrier protein (76 aa).

The region spanning 1-75 (MVFEKIKALI…DIVFYITKNT (75 aa)) is the Carrier domain. S35 is subject to O-(pantetheine 4'-phosphoryl)serine.

Belongs to the acyl carrier protein (ACP) family. 4'-phosphopantetheine is transferred from CoA to a specific serine of apo-ACP by AcpS. This modification is essential for activity because fatty acids are bound in thioester linkage to the sulfhydryl of the prosthetic group.

It is found in the cytoplasm. Its pathway is lipid metabolism; fatty acid biosynthesis. Its function is as follows. Carrier of the growing fatty acid chain in fatty acid biosynthesis. The protein is Acyl carrier protein of Onion yellows phytoplasma (strain OY-M).